The chain runs to 362 residues: Large ribosomal subunit protein uL2m (362 aa).

A mitochondrion-targeting transit peptide spans 1 to 23 (MLSYNRFRGYLIPQIHALKLFRY). The disordered stretch occupies residues 306–362 (AMNPCDHPHGGGGGKSIGNKPSQSPWGVLAKGGYKTRRGKNVNKLLVRDRPRGKEKR). Positions 351-362 (LVRDRPRGKEKR) are enriched in basic and acidic residues.

The protein belongs to the universal ribosomal protein uL2 family. As to quaternary structure, component of the mitochondrial large ribosomal subunit (mt-LSU). Mature yeast 74S mitochondrial ribosomes consist of a small (37S) and a large (54S) subunit. The 37S small subunit contains a 15S ribosomal RNA (15S mt-rRNA) and at least 32 different proteins. The 54S large subunit contains a 21S rRNA (21S mt-rRNA) and at least 45 different proteins. uL2m has a Na/K ligand binding site.

It localises to the mitochondrion. In terms of biological role, component of the mitochondrial ribosome (mitoribosome), a dedicated translation machinery responsible for the synthesis of mitochondrial genome-encoded proteins, including at least some of the essential transmembrane subunits of the mitochondrial respiratory chain. The mitoribosomes are attached to the mitochondrial inner membrane and translation products are cotranslationally integrated into the membrane. This is Large ribosomal subunit protein uL2m (rml2) from Schizosaccharomyces pombe (strain 972 / ATCC 24843) (Fission yeast).